The sequence spans 574 residues: Proline--tRNA ligase (574 aa).

The protein belongs to the class-II aminoacyl-tRNA synthetase family. ProS type 1 subfamily. Homodimer.

It is found in the cytoplasm. It catalyses the reaction tRNA(Pro) + L-proline + ATP = L-prolyl-tRNA(Pro) + AMP + diphosphate. Functionally, catalyzes the attachment of proline to tRNA(Pro) in a two-step reaction: proline is first activated by ATP to form Pro-AMP and then transferred to the acceptor end of tRNA(Pro). As ProRS can inadvertently accommodate and process non-cognate amino acids such as alanine and cysteine, to avoid such errors it has two additional distinct editing activities against alanine. One activity is designated as 'pretransfer' editing and involves the tRNA(Pro)-independent hydrolysis of activated Ala-AMP. The other activity is designated 'posttransfer' editing and involves deacylation of mischarged Ala-tRNA(Pro). The misacylated Cys-tRNA(Pro) is not edited by ProRS. The sequence is that of Proline--tRNA ligase from Nitratidesulfovibrio vulgaris (strain DP4) (Desulfovibrio vulgaris).